Here is a 337-residue protein sequence, read N- to C-terminus: tRNA N6-adenosine threonylcarbamoyltransferase (337 aa).

Fe cation-binding residues include His114 and His118. Substrate contacts are provided by residues 136-140 (LVSGG), Asp169, Gly182, Asp186, and Asn275. Position 301 (Asp301) interacts with Fe cation.

This sequence belongs to the KAE1 / TsaD family. Requires Fe(2+) as cofactor.

The protein localises to the cytoplasm. It carries out the reaction L-threonylcarbamoyladenylate + adenosine(37) in tRNA = N(6)-L-threonylcarbamoyladenosine(37) in tRNA + AMP + H(+). Required for the formation of a threonylcarbamoyl group on adenosine at position 37 (t(6)A37) in tRNAs that read codons beginning with adenine. Is involved in the transfer of the threonylcarbamoyl moiety of threonylcarbamoyl-AMP (TC-AMP) to the N6 group of A37, together with TsaE and TsaB. TsaD likely plays a direct catalytic role in this reaction. In Streptococcus uberis (strain ATCC BAA-854 / 0140J), this protein is tRNA N6-adenosine threonylcarbamoyltransferase.